Here is a 146-residue protein sequence, read N- to C-terminus: NADH-quinone oxidoreductase subunit A (146 aa).

Helical transmembrane passes span 8 to 28 (FGSV…GYLT), 63 to 83 (FYVV…LYPW), and 93 to 113 (FALI…AYAW).

The protein belongs to the complex I subunit 3 family. As to quaternary structure, NDH-1 is composed of 14 different subunits. Subunits NuoA, H, J, K, L, M, N constitute the membrane sector of the complex.

Its subcellular location is the cell inner membrane. It carries out the reaction a quinone + NADH + 5 H(+)(in) = a quinol + NAD(+) + 4 H(+)(out). Functionally, NDH-1 shuttles electrons from NADH, via FMN and iron-sulfur (Fe-S) centers, to quinones in the respiratory chain. The immediate electron acceptor for the enzyme in this species is believed to be a menaquinone. Couples the redox reaction to proton translocation (for every two electrons transferred, four hydrogen ions are translocated across the cytoplasmic membrane), and thus conserves the redox energy in a proton gradient. The polypeptide is NADH-quinone oxidoreductase subunit A (Chlorobium chlorochromatii (strain CaD3)).